An 801-amino-acid polypeptide reads, in one-letter code: MDAATPGNGIISDVVFVIEGTANLGPYFESLRKHYLLPAIEYFNGGPPAETDFGGDYGGTQYSLVVFNTVDCAPESYVQCHAPTSSAYEFVQWLDSIKFMGGGGESCSLIAEGLSTALQLFDDFKKMREQIGQTHKVCILICNSPPYLLPAVESTTYSGYTTENLVQKIGERGIHFSIISPRKLPALRTLFEKAMPVGLIEPQPKDYSQDPRHMILVRGMVLPVGGATSVPGVMPPKQHISQPPLPVVPPQIASAPSHQLPPVQPPYMQVPQQSTLTPAHAAAHSAVEAAKNQKNSPSNRFLLPNLNPMPNAPAVGTPFNQPPAPTLPPNASVPKMVPSPSSLMTPASQSSLITTVTTGPGPAPVQLQQQGAPQQPVPPSMPITGAVGGVQAPQPSQPQIGTVQLPCTQTPVNGNKLLAWSGVLEWQEKPRSVSVDNNAKLTRSLPCQVYINPGENLKTDQWPQKLIMQLIPQQLLTTLGPLFRNSRMVQFHFTNKDLESLKGLYRIMGSGFAGCVHFPHTTPCEVRVLMLLYSSKKKIFMGLIPNDQSGFVNGIRQVITNHKQVQMQKIDQQRNMGAVQGVGAGSVPANSQGFLQKQPGTLPVGQAVSQQMQGQQVAPGMPSISQVAMMDEQQRSQNLLHIRVQQPQQLASQAPPQATQSSVQAPGQPQNPQPGAMLRPQNPGANPQLRNLLLSQQPPQSSVPQTQQPLHHMQQAAQSMLPHQAMGQQMQHQAPGQLQLPGQSLMHQTPAQQWGNQMQQRAPIPGTLMMSAGPRGPVPQSGLQQVQAQSVMEDDILMDLI.

Composition is skewed to low complexity over residues 647–676 (PQQLASQAPPQATQSSVQAPGQPQNPQPGA), 687–710 (PQLRNLLLSQQPPQSSVPQTQQPL), and 722–735 (PHQAMGQQMQHQAP). The segment at 647-735 (PQQLASQAPP…MGQQMQHQAP (89 aa)) is disordered. The short motif at 689 to 693 (LRNLL) is the LXXLL motif element.

The protein belongs to the Mediator complex subunit 25 family. In terms of assembly, component of the Mediator complex.

The protein resides in the nucleus. In terms of biological role, component of the Mediator complex, a coactivator involved in the regulated transcription of nearly all RNA polymerase II-dependent genes. Mediator functions as a bridge to convey information from gene-specific regulatory proteins to the basal RNA polymerase II transcription machinery. Mediator is recruited to promoters by direct interactions with regulatory proteins and serves as a scaffold for the assembly of a functional preinitiation complex with RNA polymerase II and the general transcription factors. This Xenopus laevis (African clawed frog) protein is Mediator of RNA polymerase II transcription subunit 25 (med25).